A 102-amino-acid chain; its full sequence is NADH-quinone oxidoreductase subunit K 1 (102 aa).

3 helical membrane passes run 5-25 (LSHY…GIFL), 31-51 (IVIL…MVAF), and 65-85 (LFIL…LVVF).

The protein belongs to the complex I subunit 4L family. NDH-1 is composed of 14 different subunits. Subunits NuoA, H, J, K, L, M, N constitute the membrane sector of the complex.

It localises to the cell inner membrane. The enzyme catalyses a quinone + NADH + 5 H(+)(in) = a quinol + NAD(+) + 4 H(+)(out). Functionally, NDH-1 shuttles electrons from NADH, via FMN and iron-sulfur (Fe-S) centers, to quinones in the respiratory chain. The immediate electron acceptor for the enzyme in this species is believed to be ubiquinone. Couples the redox reaction to proton translocation (for every two electrons transferred, four hydrogen ions are translocated across the cytoplasmic membrane), and thus conserves the redox energy in a proton gradient. This is NADH-quinone oxidoreductase subunit K 1 from Rhizobium etli (strain CIAT 652).